The sequence spans 207 residues: Small ribosomal subunit protein uS4c (207 aa).

The region spanning 92–156 (MRLDNILFRL…YQSIITKRIE (65 aa)) is the S4 RNA-binding domain.

Belongs to the universal ribosomal protein uS4 family. In terms of assembly, part of the 30S ribosomal subunit. Contacts protein S5. The interaction surface between S4 and S5 is involved in control of translational fidelity.

Its subcellular location is the plastid. It is found in the chloroplast. Functionally, one of the primary rRNA binding proteins, it binds directly to 16S rRNA where it nucleates assembly of the body of the 30S subunit. Its function is as follows. With S5 and S12 plays an important role in translational accuracy. The sequence is that of Small ribosomal subunit protein uS4c (rps4) from Equisetum sylvaticum (Wood horsetail).